We begin with the raw amino-acid sequence, 453 residues long: MKSLIQEKWNEILEFLKIEYNVTEVSYKTWLLPLKVYDVKDNVIKLSVDDTKIGANSLDFIKNKYSQFLKTAIAEVINQDFEIEFVLLSQTKAEEKVQTQAPNKIKNESLSYLNPRYTFDTFVVGANNNLAHAASLAVAESPAEIYNPLFIYGGVGLGKTHLMHSIAHYILEQNPNSKVLYVTSEKFTNELIESIRNADTTPTEFREKYRNIDVLLIDDIQFIIGKERTQEEFFHTFNTLHESKKQIIISSDKPPKDILTLEERLRSRFEWGLTVDIQSPDYETRMAILKKKEELDCLTIDDEVMKYIASNIKSNIRELEGALTKIVALSRLKKKEVDVILAEEALKDLISPDNKKTVTLDLIIEVVSEHFTTSTSEIYSDNRSRNIAYPRQIAMYLCRKLTSLSLTDIGKMMGNRDHSTVLHGCNKVEKDIKKDPSFQNTIDVLIKKINPTP.

The domain I, interacts with DnaA modulators stretch occupies residues 1-79; sequence MKSLIQEKWN…KTAIAEVINQ (79 aa). The domain II stretch occupies residues 79 to 111; sequence QDFEIEFVLLSQTKAEEKVQTQAPNKIKNESLS. A domain III, AAA+ region region spans residues 112–330; that stretch reads YLNPRYTFDT…GALTKIVALS (219 aa). 4 residues coordinate ATP: glycine 156, glycine 158, lysine 159, and threonine 160. The tract at residues 331 to 453 is domain IV, binds dsDNA; it reads RLKKKEVDVI…VLIKKINPTP (123 aa).

It belongs to the DnaA family. In terms of assembly, oligomerizes as a right-handed, spiral filament on DNA at oriC.

The protein localises to the cytoplasm. Functionally, plays an essential role in the initiation and regulation of chromosomal replication. ATP-DnaA binds to the origin of replication (oriC) to initiate formation of the DNA replication initiation complex once per cell cycle. Binds the DnaA box (a 9 base pair repeat at the origin) and separates the double-stranded (ds)DNA. Forms a right-handed helical filament on oriC DNA; dsDNA binds to the exterior of the filament while single-stranded (ss)DNA is stabiized in the filament's interior. The ATP-DnaA-oriC complex binds and stabilizes one strand of the AT-rich DNA unwinding element (DUE), permitting loading of DNA polymerase. After initiation quickly degrades to an ADP-DnaA complex that is not apt for DNA replication. Binds acidic phospholipids. The protein is Chromosomal replication initiator protein DnaA of Lachnoclostridium phytofermentans (strain ATCC 700394 / DSM 18823 / ISDg) (Clostridium phytofermentans).